The following is a 529-amino-acid chain: Putative amidohydrolase YtcJ (529 aa).

The protein belongs to the metallo-dependent hydrolases superfamily.

The polypeptide is Putative amidohydrolase YtcJ (ytcJ) (Bacillus subtilis (strain 168)).